The sequence spans 477 residues: Calcium/calmodulin-dependent protein kinase type 1G (477 aa).

The Protein kinase domain occupies 23–277 (FIFMEVLGSG…CEKALRHPWI (255 aa)). ATP contacts are provided by residues 29 to 37 (LGSGAFSEV) and Lys-52. The Proton acceptor role is filled by Asp-143. The tract at residues 277–317 (IDGNTALHRDIYPSVSLQIQKNFAKSKWRQAFNAAAVVHHM) is autoinhibitory domain. Residues 297–318 (KNFAKSKWRQAFNAAAVVHHMR) form a calmodulin-binding region. The segment at 326 to 388 (SPSVRQEVEN…SRPSAPSGGR (63 aa)) is disordered. Over residues 376–388 (SHSSRPSAPSGGR) the composition is skewed to low complexity.

This sequence belongs to the protein kinase superfamily. CAMK Ser/Thr protein kinase family. CaMK subfamily. May be prenylated on Cys-474. In terms of tissue distribution, highly expressed in brain, in neuronal cell bodies of the central nucleus of amygdala and ventromedial hypothalamic nucleus. Also detected in heart, testis, and kidney.

The protein resides in the cytoplasm. The protein localises to the golgi apparatus membrane. It localises to the cell membrane. It carries out the reaction L-seryl-[protein] + ATP = O-phospho-L-seryl-[protein] + ADP + H(+). It catalyses the reaction L-threonyl-[protein] + ATP = O-phospho-L-threonyl-[protein] + ADP + H(+). Activated by Ca(2+)/calmodulin. Binding of calmodulin is thought to result in a conformational change and leads to activation through phosphorylation by CAMKK1. Calcium/calmodulin-dependent protein kinase belonging to a proposed calcium-triggered signaling cascade. In vitro phosphorylates transcription factor CREB1. The sequence is that of Calcium/calmodulin-dependent protein kinase type 1G (Camk1g) from Mus musculus (Mouse).